Here is a 237-residue protein sequence, read N- to C-terminus: Lectin (237 aa).

Asparagine 69 carries N-linked (GlcNAc...) asparagine glycosylation. The residue at position 106 (isoleucine 106) is a Blocked amino end (Ile). Residues glutamate 115 and aspartate 117 each contribute to the Mn(2+) site. 4 residues coordinate Ca(2+): aspartate 117, tyrosine 120, asparagine 122, and aspartate 127. Aspartate 127 and histidine 132 together coordinate Mn(2+).

The protein belongs to the leguminous lectin family. Tetramer of two alpha and two beta chains. In terms of processing, the N-terminus of alpha chain is blocked. The alpha and beta chains are produced by proteolytic processing, with probably the loss of intervening amino acid(s).

D-mannose/D-glucose-binding lectin. Requires Ca(2+) and Mn(2+) ions for full activity. The chain is Lectin from Lablab purpureus (Hyacinth bean).